The chain runs to 370 residues: UDP-N-acetylglucosamine--N-acetylmuramyl-(pentapeptide) pyrophosphoryl-undecaprenol N-acetylglucosamine transferase (370 aa).

Residues 10–12 (TGG), Asn124, Ser196, Ile253, and Gln298 each bind UDP-N-acetyl-alpha-D-glucosamine.

It belongs to the glycosyltransferase 28 family. MurG subfamily.

It is found in the cell membrane. It carries out the reaction Mur2Ac(oyl-L-Ala-gamma-D-Glu-L-Lys-D-Ala-D-Ala)-di-trans,octa-cis-undecaprenyl diphosphate + UDP-N-acetyl-alpha-D-glucosamine = beta-D-GlcNAc-(1-&gt;4)-Mur2Ac(oyl-L-Ala-gamma-D-Glu-L-Lys-D-Ala-D-Ala)-di-trans,octa-cis-undecaprenyl diphosphate + UDP + H(+). Its pathway is cell wall biogenesis; peptidoglycan biosynthesis. Its function is as follows. Cell wall formation. Catalyzes the transfer of a GlcNAc subunit on undecaprenyl-pyrophosphoryl-MurNAc-pentapeptide (lipid intermediate I) to form undecaprenyl-pyrophosphoryl-MurNAc-(pentapeptide)GlcNAc (lipid intermediate II). The chain is UDP-N-acetylglucosamine--N-acetylmuramyl-(pentapeptide) pyrophosphoryl-undecaprenol N-acetylglucosamine transferase from Limosilactobacillus reuteri subsp. reuteri (strain JCM 1112) (Lactobacillus reuteri).